A 698-amino-acid chain; its full sequence is Elongation factor G 1 (698 aa).

Residues 8-290 (ERYRNIGICA…AVVEFLPAPV (283 aa)) form the tr-type G domain. GTP is bound by residues 17–24 (AHVDAGKT), 88–92 (DTPGH), and 142–145 (NKMD).

It belongs to the TRAFAC class translation factor GTPase superfamily. Classic translation factor GTPase family. EF-G/EF-2 subfamily.

The protein resides in the cytoplasm. Catalyzes the GTP-dependent ribosomal translocation step during translation elongation. During this step, the ribosome changes from the pre-translocational (PRE) to the post-translocational (POST) state as the newly formed A-site-bound peptidyl-tRNA and P-site-bound deacylated tRNA move to the P and E sites, respectively. Catalyzes the coordinated movement of the two tRNA molecules, the mRNA and conformational changes in the ribosome. In Shewanella oneidensis (strain ATCC 700550 / JCM 31522 / CIP 106686 / LMG 19005 / NCIMB 14063 / MR-1), this protein is Elongation factor G 1.